The primary structure comprises 337 residues: tRNA N6-adenosine threonylcarbamoyltransferase (337 aa).

Fe cation is bound by residues His111 and His115. Substrate-binding positions include 134–138, Asp167, Gly180, and Asn272; that span reads LVSGG. Asp300 is a binding site for Fe cation.

This sequence belongs to the KAE1 / TsaD family. Fe(2+) is required as a cofactor.

Its subcellular location is the cytoplasm. The enzyme catalyses L-threonylcarbamoyladenylate + adenosine(37) in tRNA = N(6)-L-threonylcarbamoyladenosine(37) in tRNA + AMP + H(+). Its function is as follows. Required for the formation of a threonylcarbamoyl group on adenosine at position 37 (t(6)A37) in tRNAs that read codons beginning with adenine. Is involved in the transfer of the threonylcarbamoyl moiety of threonylcarbamoyl-AMP (TC-AMP) to the N6 group of A37, together with TsaE and TsaB. TsaD likely plays a direct catalytic role in this reaction. The protein is tRNA N6-adenosine threonylcarbamoyltransferase of Salmonella arizonae (strain ATCC BAA-731 / CDC346-86 / RSK2980).